We begin with the raw amino-acid sequence, 124 residues long: Small ribosomal subunit protein uS13 (124 aa).

A compositionally biased stretch (basic residues) spans 103 to 117 (KCNARTRKGPRKTVA). The tract at residues 103 to 124 (KCNARTRKGPRKTVANKKIETK) is disordered.

This sequence belongs to the universal ribosomal protein uS13 family. In terms of assembly, part of the 30S ribosomal subunit. Forms a loose heterodimer with protein S19. Forms two bridges to the 50S subunit in the 70S ribosome.

In terms of biological role, located at the top of the head of the 30S subunit, it contacts several helices of the 16S rRNA. In the 70S ribosome it contacts the 23S rRNA (bridge B1a) and protein L5 of the 50S subunit (bridge B1b), connecting the 2 subunits; these bridges are implicated in subunit movement. Contacts the tRNAs in the A and P-sites. The chain is Small ribosomal subunit protein uS13 from Malacoplasma penetrans (strain HF-2) (Mycoplasma penetrans).